A 336-amino-acid chain; its full sequence is Formimidoylglutamase (336 aa).

Mn(2+) is bound by residues H129, D160, H162, D164, D257, and D259.

This sequence belongs to the arginase family. It depends on Mn(2+) as a cofactor.

It catalyses the reaction N-formimidoyl-L-glutamate + H2O = formamide + L-glutamate. It participates in amino-acid degradation; L-histidine degradation into L-glutamate; L-glutamate from N-formimidoyl-L-glutamate (hydrolase route): step 1/1. Catalyzes the conversion of N-formimidoyl-L-glutamate to L-glutamate and formamide. The sequence is that of Formimidoylglutamase from Vibrio vulnificus (strain CMCP6).